The primary structure comprises 473 residues: Probable DNA N(6)-methyladenine demethylase ALKBH1B (473 aa).

2-oxoglutarate is bound at residue 357–359 (NFY). Fe cation-binding residues include His368, Asp391, and His449. 461 to 465 (RLFFR) contributes to the 2-oxoglutarate binding site.

The protein belongs to the alkB family. It depends on Fe(2+) as a cofactor. In terms of tissue distribution, undetectable.

It carries out the reaction an N(6)-methyl-2'-deoxyadenosine in DNA + 2-oxoglutarate + O2 = a 2'-deoxyadenosine in DNA + formaldehyde + succinate + CO2. In terms of biological role, dioxygenase that may catalyzes DNA N(6)-methyladenine (6 mA) demethylation. Requires molecular oxygen, alpha-ketoglutarate and iron. The chain is Probable DNA N(6)-methyladenine demethylase ALKBH1B from Arabidopsis thaliana (Mouse-ear cress).